The primary structure comprises 225 residues: Small ribosomal subunit protein uS2 (225 aa).

Residues 1–13 (MAEAKPALEKEAA) show a composition bias toward basic and acidic residues. Positions 1-33 (MAEAKPALEKEAAVKTGSIPSESEDETASHKEG) are disordered.

Belongs to the universal ribosomal protein uS2 family.

The sequence is that of Small ribosomal subunit protein uS2 from Methanosarcina acetivorans (strain ATCC 35395 / DSM 2834 / JCM 12185 / C2A).